Consider the following 194-residue polypeptide: Outer surface 22 kDa lipoprotein (194 aa).

An N-terminal signal peptide occupies residues Met-1–Ala-21. The N-palmitoyl cysteine moiety is linked to residue Cys-22. Cys-22 is lipidated: S-diacylglycerol cysteine.

It is found in the cell outer membrane. This chain is Outer surface 22 kDa lipoprotein (p22), found in Borreliella burgdorferi (strain ZS7) (Borrelia burgdorferi).